The following is a 485-amino-acid chain: Phenylalanine--tRNA ligase alpha subunit, cytoplasmic (485 aa).

Residues Thr-318, 360–362, and Tyr-400 contribute to the L-phenylalanine site; that span reads QIE. Glu-402 serves as a coordination point for Mg(2+). Phe-426 lines the L-phenylalanine pocket.

It belongs to the class-II aminoacyl-tRNA synthetase family. Phe-tRNA synthetase alpha subunit type 2 subfamily. Tetramer of two alpha and two beta subunits. It depends on Mg(2+) as a cofactor.

The protein resides in the cytoplasm. It is found in the cytosol. The catalysed reaction is tRNA(Phe) + L-phenylalanine + ATP = L-phenylalanyl-tRNA(Phe) + AMP + diphosphate + H(+). The chain is Phenylalanine--tRNA ligase alpha subunit, cytoplasmic from Arabidopsis thaliana (Mouse-ear cress).